Consider the following 337-residue polypeptide: Peroxidase 14 (337 aa).

The first 22 residues, 1-22 (MARIGSFLILLSLTYALTLCIC), serve as a signal peptide directing secretion. Residue Asn-24 is glycosylated (N-linked (GlcNAc...) asparagine). Disulfide bonds link Cys-44/Cys-124, Cys-77/Cys-82, Cys-130/Cys-331, and Cys-209/Cys-241. The active-site Proton acceptor is the His-75. Positions 76, 79, 81, 83, and 85 each coordinate Ca(2+). Pro-172 serves as a coordination point for substrate. N-linked (GlcNAc...) asparagine glycosylation occurs at Asn-191. Position 202 (His-202) interacts with heme b. Residue Thr-203 participates in Ca(2+) binding. Residues Asn-218 and Asn-249 are each glycosylated (N-linked (GlcNAc...) asparagine). 3 residues coordinate Ca(2+): Asp-254, Ser-257, and Asp-262.

It belongs to the peroxidase family. Classical plant (class III) peroxidase subfamily. Requires heme b as cofactor. Ca(2+) is required as a cofactor.

The protein resides in the secreted. It catalyses the reaction 2 a phenolic donor + H2O2 = 2 a phenolic radical donor + 2 H2O. Functionally, removal of H(2)O(2), oxidation of toxic reductants, biosynthesis and degradation of lignin, suberization, auxin catabolism, response to environmental stresses such as wounding, pathogen attack and oxidative stress. These functions might be dependent on each isozyme/isoform in each plant tissue. In Arabidopsis thaliana (Mouse-ear cress), this protein is Peroxidase 14 (PER14).